A 215-amino-acid chain; its full sequence is Probable phosphoglycerate mutase GpmB (215 aa).

Substrate is bound by residues 8–15, 21–22, R58, R60, 82–85, 104–105, and 151–152; these read RHGETQWN, QG, ELDM, RR, and GI. The active-site Tele-phosphohistidine intermediate is H9. E82 acts as the Proton donor/acceptor in catalysis.

Belongs to the phosphoglycerate mutase family. GpmB subfamily.

The catalysed reaction is (2R)-2-phosphoglycerate = (2R)-3-phosphoglycerate. It functions in the pathway carbohydrate degradation; glycolysis; pyruvate from D-glyceraldehyde 3-phosphate: step 3/5. The chain is Probable phosphoglycerate mutase GpmB from Klebsiella pneumoniae subsp. pneumoniae (strain ATCC 700721 / MGH 78578).